The following is a 1177-amino-acid chain: DNA-directed RNA polymerase subunit beta' (1177 aa).

Zn(2+) is bound by residues cysteine 60, cysteine 62, cysteine 75, and cysteine 78. Residues aspartate 450, aspartate 452, and aspartate 454 each coordinate Mg(2+). Zn(2+) is bound by residues cysteine 795, cysteine 869, cysteine 876, and cysteine 879.

Belongs to the RNA polymerase beta' chain family. The RNAP catalytic core consists of 2 alpha, 1 beta, 1 beta' and 1 omega subunit. When a sigma factor is associated with the core the holoenzyme is formed, which can initiate transcription. Requires Mg(2+) as cofactor. Zn(2+) serves as cofactor.

It carries out the reaction RNA(n) + a ribonucleoside 5'-triphosphate = RNA(n+1) + diphosphate. DNA-dependent RNA polymerase catalyzes the transcription of DNA into RNA using the four ribonucleoside triphosphates as substrates. In Clostridium botulinum (strain Eklund 17B / Type B), this protein is DNA-directed RNA polymerase subunit beta'.